The following is a 1136-amino-acid chain: Protein stu-1 (1136 aa).

HEAT repeat units follow at residues 95 to 133 and 167 to 205; these read TLPV…ERSV and YVPT…KSDL. Disordered regions lie at residues 524 to 554, 567 to 794, and 821 to 884; these read KDPH…MGAP, RAMA…QPQI, and TAGQ…LLDS. The segment covering 595 to 622 has biased composition (low complexity); it reads VSSTSQASVASASTASAVPAPTKSAFGA. Pro residues predominate over residues 659 to 668; that stretch reads PAEPASPPSK. Polar residues predominate over residues 673 to 683; it reads TVTSPKTQTLV. A compositionally biased stretch (low complexity) spans 701–716; the sequence is SSESGIPIPVSGISSP. 2 stretches are compositionally biased toward polar residues: residues 777 to 793 and 822 to 833; these read LPTQ…QQPQ and AGQTQPQSTYTS.

The protein belongs to the CLASP family. Interacts with microtubules.

Its subcellular location is the nucleus. The protein resides in the cytoplasm. It is found in the cytoskeleton. It localises to the spindle. Its function is as follows. Microtubule binding protein that promotes the stabilization of dynamic microtubules. Required for mitotic spindle formation. In Neurospora crassa (strain ATCC 24698 / 74-OR23-1A / CBS 708.71 / DSM 1257 / FGSC 987), this protein is Protein stu-1 (stu-1).